The primary structure comprises 101 residues: Urease subunit beta (101 aa).

The protein belongs to the urease beta subunit family. In terms of assembly, heterotrimer of UreA (gamma), UreB (beta) and UreC (alpha) subunits. Three heterotrimers associate to form the active enzyme.

It is found in the cytoplasm. The enzyme catalyses urea + 2 H2O + H(+) = hydrogencarbonate + 2 NH4(+). It functions in the pathway nitrogen metabolism; urea degradation; CO(2) and NH(3) from urea (urease route): step 1/1. The chain is Urease subunit beta from Burkholderia mallei (strain NCTC 10247).